The sequence spans 235 residues: Large ribosomal subunit protein uL1 (235 aa).

This sequence belongs to the universal ribosomal protein uL1 family. As to quaternary structure, part of the 50S ribosomal subunit.

In terms of biological role, binds directly to 23S rRNA. The L1 stalk is quite mobile in the ribosome, and is involved in E site tRNA release. Functionally, protein L1 is also a translational repressor protein, it controls the translation of the L11 operon by binding to its mRNA. This Blochmanniella floridana protein is Large ribosomal subunit protein uL1.